Reading from the N-terminus, the 170-residue chain is RNA pyrophosphohydrolase (170 aa).

In terms of domain architecture, Nudix hydrolase spans 6 to 149 (GFRPNVGIIL…KRDVYRRALK (144 aa)). Positions 39-60 (GGIKHNESPENALYRELEEEVG) match the Nudix box motif.

It belongs to the Nudix hydrolase family. RppH subfamily. Requires a divalent metal cation as cofactor.

In terms of biological role, accelerates the degradation of transcripts by removing pyrophosphate from the 5'-end of triphosphorylated RNA, leading to a more labile monophosphorylated state that can stimulate subsequent ribonuclease cleavage. The chain is RNA pyrophosphohydrolase from Saccharophagus degradans (strain 2-40 / ATCC 43961 / DSM 17024).